The sequence spans 126 residues: C-type natriuretic peptide (126 aa).

An N-terminal signal peptide occupies residues 1-23 (MHLSQLLACALLLALLSLRPSEA). The tract at residues 20–71 (PSEAKPGAPPKVPRTPSGEEVAEPQAAGGGQKKGDKTPGGGGANLKDDRSRL) is disordered. The propeptide occupies 24 to 73 (KPGAPPKVPRTPSGEEVAEPQAAGGGQKKGDKTPGGGGANLKDDRSRLLR). Residues 46–62 (AGGGQKKGDKTPGGGGA) show a composition bias toward gly residues. A disulfide bridge connects residues cysteine 110 and cysteine 126.

This sequence belongs to the natriuretic peptide family. Post-translationally, degraded by IDE (in vitro).

The protein resides in the secreted. In terms of biological role, hormone which plays a role in endochondral ossification through regulation of cartilaginous growth plate chondrocytes proliferation and differentiation. May also be vasoactive and natriuretic. Acts by specifically binding and stimulating NPR2 to produce cGMP. Binds the clearance receptor NPR3. This Bos taurus (Bovine) protein is C-type natriuretic peptide (NPPC).